Consider the following 451-residue polypeptide: F-box only protein 47 (451 aa).

Residues 41 to 91 (LGNFKVLPLEILHIILRYLSVKDIGMLSMVSKTVSQHIINYISTSSGSRRL) enclose the F-box domain.

In terms of assembly, part of a SCF (SKP1-cullin-F-box) protein ligase complex.

Probably recognizes and binds to some phosphorylated proteins and promotes their ubiquitination and degradation. The protein is F-box only protein 47 (Fbxo47) of Mus musculus (Mouse).